The primary structure comprises 340 residues: Heat-inducible transcription repressor HrcA (340 aa).

The protein belongs to the HrcA family.

Its function is as follows. Negative regulator of class I heat shock genes (grpE-dnaK-dnaJ and groELS operons). Prevents heat-shock induction of these operons. This is Heat-inducible transcription repressor HrcA from Burkholderia mallei (strain NCTC 10247).